A 273-amino-acid chain; its full sequence is L-cysteine S-thiosulfotransferase subunit SoxA (273 aa).

A signal peptide spans 1-24; sequence MKKTVTAVALLCALSSTAIAPTFA. Cysteines 74 and 110 form a disulfide. The 112-residue stretch at 162–273 folds into the Cytochrome c domain; sequence EMYELGKRMF…GVMLTPGIKR (112 aa). 2 residues coordinate heme: Cys-182 and His-186. Residue Arg-230 coordinates substrate. Cys-234 is a heme binding site. Catalysis depends on Cys-234, which acts as the Cysteine persulfide intermediate.

It belongs to the SoxA family. In terms of assembly, heterodimer of SoxA and SoxX. It depends on heme as a cofactor. Cysteine persulfide at Cys-234.

The protein localises to the periplasm. It carries out the reaction L-cysteinyl-[SoxY protein] + thiosulfate + 2 Fe(III)-[cytochrome c] = S-sulfosulfanyl-L-cysteinyl-[SoxY protein] + 2 Fe(II)-[cytochrome c] + 2 H(+). The catalysed reaction is S-sulfanyl-L-cysteinyl-[SoxY protein] + thiosulfate + 2 Fe(III)-[cytochrome c] = S-(2-sulfodisulfanyl)-L-cysteinyl-[SoxY protein] + 2 Fe(II)-[cytochrome c] + 2 H(+). C-type monoheme cytochrome, which is part of the SoxAX cytochrome complex involved in sulfur oxidation. The SoxAX complex catalyzes the formation of a heterodisulfide bond between the conserved cysteine residue on a sulfur carrier SoxYZ complex subunit SoxY and thiosulfate or other inorganic sulfur substrates. This leads to the liberation of two electrons, which may be transferred from the SoxAX complex to another cytochrome c that then channels them into the respiratory electron transport chain. Some electrons may be used for reductive CO(2) fixation. The chain is L-cysteine S-thiosulfotransferase subunit SoxA from Hydrogenophilus thermoluteolus (Pseudomonas hydrogenothermophila).